The chain runs to 292 residues: RNA polymerase II transcriptional coactivator SUB1 (292 aa).

Disordered regions lie at residues 1–31 (MSYY…GGMP) and 117–292 (LLSD…SEEE). Over residues 20-31 (LSNSNNNNGGMP) the composition is skewed to low complexity. Ser119 carries the post-translational modification Phosphoserine. Composition is skewed to basic and acidic residues over residues 133–166 (NNDK…LEPR), 179–191 (PHEE…EREA), 204–240 (KQQE…KIAE), and 251–267 (AKKE…KDAN). Phosphoserine is present on residues Ser268, Ser269, and Ser289.

It belongs to the transcriptional coactivator PC4 family.

The protein localises to the nucleus. Functionally, plays a role in the release of TFIIB from the transcription complex during transcription initiation. Binds to TFIIB and specifically inhibits the formation of the TBP-TFIIB-promoter complexes. The chain is RNA polymerase II transcriptional coactivator SUB1 (SUB1) from Saccharomyces cerevisiae (strain ATCC 204508 / S288c) (Baker's yeast).